Consider the following 332-residue polypeptide: Malate dehydrogenase (332 aa).

Residues 16-17 (QI), Asp-43, and Gly-90 contribute to the NAD(+) site. Arg-99 contacts oxaloacetate. The NAD(+) site is built by Gln-113 and Asn-132. The oxaloacetate site is built by Asn-132, Arg-163, His-188, and Ser-243. His-188 serves as the catalytic Proton acceptor.

Belongs to the LDH/MDH superfamily. MDH type 2 family. In terms of assembly, homodimer.

It is found in the cytoplasm. The enzyme catalyses (S)-malate + NAD(+) = oxaloacetate + NADH + H(+). Its function is as follows. Catalyzes the reduction of the carbonyl group of oxalacetic acid. No activity with pulegone. The protein is Malate dehydrogenase (MD1) of Nicotiana tabacum (Common tobacco).